The following is a 232-amino-acid chain: MENQPKLNSSKEVIAFLAERFPHCFSAEGEARPLKIGIFQDLVDRVAGEMNLSKTQLRSALRLYTSSWRYLYGVKPGATRVDLDGNPCGELDEQHVEHARKQLEEAKARVQAQRAEQQAKKREAAATAGEKEDAPRRERKPRPTTPRRKEGAERKPRAQKPVEKAPKTVKAPREEQHTPVSDISALTVGQALKVKAGQNAMDATVLEITKDGVRVQLNSGMSLIVRAEHLVF.

The disordered stretch occupies residues 105-182 (EAKARVQAQR…REEQHTPVSD (78 aa)). Residues 117 to 136 (QQAKKREAAATAGEKEDAPR) are compositionally biased toward basic and acidic residues. The segment covering 137–146 (RERKPRPTTP) has biased composition (basic residues). Residues 147-177 (RRKEGAERKPRAQKPVEKAPKTVKAPREEQH) are compositionally biased toward basic and acidic residues.

Belongs to the ProQ family.

It localises to the cytoplasm. RNA chaperone with significant RNA binding, RNA strand exchange and RNA duplexing activities. May regulate ProP activity through an RNA-based, post-transcriptional mechanism. This chain is RNA chaperone ProQ, found in Escherichia coli (strain K12).